Reading from the N-terminus, the 437-residue chain is tRNA-queuosine alpha-mannosyltransferase (437 aa).

This sequence belongs to the glycosyltransferase group 1 family. Glycosyltransferase 4 subfamily.

The protein localises to the cytoplasm. It localises to the nucleus. The catalysed reaction is queuosine(34) in tRNA(Asp) + GDP-alpha-D-mannose = O-4''-alpha-D-mannosylqueuosine(34) in tRNA(Asp) + GDP + H(+). Functionally, glycosyltransferase that specifically catalyzes mannosylation of cytoplasmic tRNA(Asp) modified with queuosine at position 34 (queuosine(34)). Mannosylates the cyclopentene moiety of queuosine(34) in tRNA(Asp) to form mannosyl-queuosine(34). Mannosylation of queuosine(34) in tRNA(Asp) is required to slow-down elongation at cognate codons, GAC and GAU, thereby regulating protein translation. In Xenopus tropicalis (Western clawed frog), this protein is tRNA-queuosine alpha-mannosyltransferase (gtdc1).